The sequence spans 213 residues: uncharacterized protein (213 aa).

3 helical membrane-spanning segments follow: residues 26 to 46, 112 to 132, and 136 to 156; these read FINFIRIAIFIVMAWIGGLKV, ASYIIGAIIVTVGILTLAGIW, and AGLAGGLLTFGMSIVTLSFLI.

It localises to the cell membrane. This is an uncharacterized protein from Haemophilus influenzae (strain ATCC 51907 / DSM 11121 / KW20 / Rd).